The following is a 105-amino-acid chain: Insulin (105 aa).

A signal peptide spans 1–24 (MALWTRLRPLLALLALWPPPPARA). 3 disulfides stabilise this stretch: C31–C91, C43–C104, and C90–C95. Positions 57-82 (EVEGPQVGALELAGGPGAGGLEGPPQ) are cleaved as a propeptide — c peptide.

The protein belongs to the insulin family. Heterodimer of a B chain and an A chain linked by two disulfide bonds.

The protein resides in the secreted. Insulin decreases blood glucose concentration. It increases cell permeability to monosaccharides, amino acids and fatty acids. It accelerates glycolysis, the pentose phosphate cycle, and glycogen synthesis in liver. The sequence is that of Insulin (INS) from Bos taurus (Bovine).